Here is a 249-residue protein sequence, read N- to C-terminus: MIT domain-containing protein 1 (249 aa).

Residues 8–86 (QDSDSTAAVA…KYLDQEKEDG (79 aa)) enclose the MIT domain. The segment at 168 to 231 (SGLEEIKQSL…SLGYYDLDLR (64 aa)) is important for association with membranes.

As to quaternary structure, homodimer. Interacts (via MIT domain) with CHMP1A, CHMP1B, CHMP2A and IST1.

Its subcellular location is the late endosome membrane. It localises to the midbody. The protein localises to the membrane. In terms of biological role, required for efficient abscission at the end of cytokinesis, together with components of the ESCRT-III complex. In Mus musculus (Mouse), this protein is MIT domain-containing protein 1 (Mitd1).